We begin with the raw amino-acid sequence, 545 residues long: CTP synthase (545 aa).

An amidoligase domain region spans residues 1–266 (MATNYIFVTG…DDFVCERFRL (266 aa)). Position 14 (serine 14) interacts with CTP. Serine 14 serves as a coordination point for UTP. ATP contacts are provided by residues 15 to 20 (SLGKGI) and aspartate 72. Residues aspartate 72 and glutamate 140 each contribute to the Mg(2+) site. CTP-binding positions include 147 to 149 (DIE), 187 to 192 (KTKPTQ), and lysine 223. UTP is bound by residues 187–192 (KTKPTQ) and lysine 223. 239-241 (KDV) contacts ATP. Residues 291–542 (TIGMVGKYTE…VKAAYENHKK (252 aa)) form the Glutamine amidotransferase type-1 domain. L-glutamine is bound at residue glycine 352. Cysteine 379 (nucleophile; for glutamine hydrolysis) is an active-site residue. Residues 380-383 (LGMQ), glutamate 403, and arginine 470 contribute to the L-glutamine site. Active-site residues include histidine 515 and glutamate 517.

This sequence belongs to the CTP synthase family. As to quaternary structure, homotetramer.

The catalysed reaction is UTP + L-glutamine + ATP + H2O = CTP + L-glutamate + ADP + phosphate + 2 H(+). The enzyme catalyses L-glutamine + H2O = L-glutamate + NH4(+). It catalyses the reaction UTP + NH4(+) + ATP = CTP + ADP + phosphate + 2 H(+). Its pathway is pyrimidine metabolism; CTP biosynthesis via de novo pathway; CTP from UDP: step 2/2. Its activity is regulated as follows. Allosterically activated by GTP, when glutamine is the substrate; GTP has no effect on the reaction when ammonia is the substrate. The allosteric effector GTP functions by stabilizing the protein conformation that binds the tetrahedral intermediate(s) formed during glutamine hydrolysis. Inhibited by the product CTP, via allosteric rather than competitive inhibition. Catalyzes the ATP-dependent amination of UTP to CTP with either L-glutamine or ammonia as the source of nitrogen. Regulates intracellular CTP levels through interactions with the four ribonucleotide triphosphates. The sequence is that of CTP synthase from Haemophilus influenzae (strain PittGG).